Consider the following 578-residue polypeptide: Proline--tRNA ligase (578 aa).

The protein belongs to the class-II aminoacyl-tRNA synthetase family. ProS type 1 subfamily. As to quaternary structure, homodimer.

It localises to the cytoplasm. The catalysed reaction is tRNA(Pro) + L-proline + ATP = L-prolyl-tRNA(Pro) + AMP + diphosphate. Its function is as follows. Catalyzes the attachment of proline to tRNA(Pro) in a two-step reaction: proline is first activated by ATP to form Pro-AMP and then transferred to the acceptor end of tRNA(Pro). As ProRS can inadvertently accommodate and process non-cognate amino acids such as alanine and cysteine, to avoid such errors it has two additional distinct editing activities against alanine. One activity is designated as 'pretransfer' editing and involves the tRNA(Pro)-independent hydrolysis of activated Ala-AMP. The other activity is designated 'posttransfer' editing and involves deacylation of mischarged Ala-tRNA(Pro). The misacylated Cys-tRNA(Pro) is not edited by ProRS. In Burkholderia vietnamiensis (strain G4 / LMG 22486) (Burkholderia cepacia (strain R1808)), this protein is Proline--tRNA ligase.